The following is a 63-amino-acid chain: Light-harvesting protein B-800/850 alpha chain (63 aa).

Residues 1–14 (MNNAKMWLVVKPTV) lie on the Cytoplasmic side of the membrane. The helical transmembrane segment at 15–35 (GIPLFLVACAIASFLVHLMLV) threads the bilayer. H31 is an a bacteriochlorophyll binding site. Residues 36–63 (LTTGWMGDYYSGSFEAASLVSNATTLLS) are Periplasmic-facing.

This sequence belongs to the antenna complex alpha subunit family. The core complex is formed by different alpha and beta chains, binding bacteriochlorophyll molecules, and arranged most probably in tetrameric structures disposed around the reaction center. The non-pigmented gamma chains may constitute additional components.

It localises to the cell inner membrane. Its function is as follows. Antenna complexes are light-harvesting systems, which transfer the excitation energy to the reaction centers. The sequence is that of Light-harvesting protein B-800/850 alpha chain (pucA) from Rhodovulum sulfidophilum (Rhodobacter sulfidophilus).